Consider the following 330-residue polypeptide: UPF0324 membrane protein BT_4609 (330 aa).

10 helical membrane passes run 16 to 33 (IYVA…LDYI), 38 to 60 (AWSA…LTCG), 73 to 95 (YLLQ…LASG), 99 to 116 (MEFT…GWFI), 128 to 150 (SYLI…GPVL), 160 to 182 (ALGT…GHAL), 189 to 211 (FGTW…AAYG), 221 to 240 (IKLT…SFIF), 247 to 269 (ISIP…LLNG), and 284 to 306 (TLTI…SVGV).

Belongs to the UPF0324 family.

It localises to the cell membrane. The sequence is that of UPF0324 membrane protein BT_4609 from Bacteroides thetaiotaomicron (strain ATCC 29148 / DSM 2079 / JCM 5827 / CCUG 10774 / NCTC 10582 / VPI-5482 / E50).